Consider the following 36-residue polypeptide: Putative DNA-binding protein inhibitor ID-2B (36 aa).

This Homo sapiens (Human) protein is Putative DNA-binding protein inhibitor ID-2B (ID2B).